A 161-amino-acid chain; its full sequence is Regulator of ribonuclease activity A (161 aa).

Belongs to the RraA family. In terms of assembly, homotrimer. Binds to both RNA-binding sites in the C-terminal region of Rne and to RhlB.

The protein localises to the cytoplasm. In terms of biological role, globally modulates RNA abundance by binding to RNase E (Rne) and regulating its endonucleolytic activity. Can modulate Rne action in a substrate-dependent manner by altering the composition of the degradosome. Modulates RNA-binding and helicase activities of the degradosome. The protein is Regulator of ribonuclease activity A of Shewanella denitrificans (strain OS217 / ATCC BAA-1090 / DSM 15013).